The primary structure comprises 505 residues: 2,3-bisphosphoglycerate-independent phosphoglycerate mutase (505 aa).

Mn(2+) is bound by residues D11 and S61. Residue S61 is the Phosphoserine intermediate of the active site. Residues H122, 152 to 153 (RD), R183, R189, 259 to 262 (RTDR), and K332 contribute to the substrate site. Mn(2+) contacts are provided by D399, H403, D440, H441, and H458.

The protein belongs to the BPG-independent phosphoglycerate mutase family. In terms of assembly, monomer. The cofactor is Mn(2+).

It carries out the reaction (2R)-2-phosphoglycerate = (2R)-3-phosphoglycerate. The protein operates within carbohydrate degradation; glycolysis; pyruvate from D-glyceraldehyde 3-phosphate: step 3/5. In terms of biological role, catalyzes the interconversion of 2-phosphoglycerate and 3-phosphoglycerate. This is 2,3-bisphosphoglycerate-independent phosphoglycerate mutase from Flavobacterium psychrophilum (strain ATCC 49511 / DSM 21280 / CIP 103535 / JIP02/86).